Consider the following 339-residue polypeptide: Meiotic recombination protein rec7 (339 aa).

Functionally, may be involved primarily in the early steps of meiotic recombination. This Schizosaccharomyces pombe (strain 972 / ATCC 24843) (Fission yeast) protein is Meiotic recombination protein rec7 (rec7).